The chain runs to 223 residues: 7-cyano-7-deazaguanine synthase (223 aa).

Position 8–18 (8–18 (MSGGMDSTLCA)) interacts with ATP. 4 residues coordinate Zn(2+): cysteine 187, cysteine 195, cysteine 198, and cysteine 201.

This sequence belongs to the QueC family. It depends on Zn(2+) as a cofactor.

The catalysed reaction is 7-carboxy-7-deazaguanine + NH4(+) + ATP = 7-cyano-7-deazaguanine + ADP + phosphate + H2O + H(+). Its pathway is purine metabolism; 7-cyano-7-deazaguanine biosynthesis. Catalyzes the ATP-dependent conversion of 7-carboxy-7-deazaguanine (CDG) to 7-cyano-7-deazaguanine (preQ(0)). This is 7-cyano-7-deazaguanine synthase from Campylobacter curvus (strain 525.92).